The sequence spans 30 residues: Natriuretic peptides A (30 aa).

A propeptide spanning residues 1-3 (APR) is cleaved from the precursor. A disulfide bridge links C11 with C27.

The protein belongs to the natriuretic peptide family. Post-translationally, cleaved upon secretion to produce the functional hormone.

It is found in the secreted. Hormone playing a key role in cardiovascular homeostasis through regulation of natriuresis, diuresis, and vasodilation. Has a cGMP-stimulating activity. The protein is Natriuretic peptides A of Pelophylax ridibundus (Marsh frog).